The primary structure comprises 420 residues: Phosphoglycerate kinase (420 aa).

Positions 26, 27, 28, 29, 42, 43, 66, 67, 69, 70, 125, 126, 173, and 174 each coordinate (2R)-3-phosphoglycerate. Tyrosine 199 is subject to Phosphotyrosine. Serine 206 bears the Phosphoserine mark. The interval 209–228 (KPFLAILGGAKVSDKIKLIE) is calmodulin binding. Glycine 217 serves as a coordination point for ADP. Glycine 217 lines the CDP pocket. AMP is bound by residues alanine 218 and lysine 219. Residue alanine 218 participates in ATP binding. Alanine 218 contacts Mg(2+). Aspartate 222 lines the CDP pocket. Aspartate 222 provides a ligand contact to Mg(2+). Lysine 223 lines the AMP pocket. Residue lysine 223 participates in ATP binding. Glycine 241 is a binding site for ADP. Residue glycine 241 participates in CDP binding. AMP is bound by residues glycine 242 and glycine 316. ATP is bound by residues glycine 242 and glycine 316. The CDP site is built by glycine 341 and phenylalanine 346. Phenylalanine 346 provides a ligand contact to ADP. Glutamate 347 is a binding site for AMP. Positions 347, 378, and 379 each coordinate ATP. Position 378 (aspartate 378) interacts with Mg(2+). At serine 393 the chain carries Phosphoserine.

Belongs to the phosphoglycerate kinase family. In terms of assembly, monomer. Interacts with calmodulin in the presence of Ca(2+). It depends on Mg(2+) as a cofactor.

Its subcellular location is the cytoplasm. It catalyses the reaction (2R)-3-phosphoglycerate + ATP = (2R)-3-phospho-glyceroyl phosphate + ADP. Its pathway is carbohydrate degradation; glycolysis; pyruvate from D-glyceraldehyde 3-phosphate: step 2/5. The polypeptide is Phosphoglycerate kinase (Dictyostelium discoideum (Social amoeba)).